The chain runs to 357 residues: MDAPRINKWLKPLSALYGVGVRLRNYLFDKNVLISNSFDIPIVCVGNITIGGTGKTPHVEYLIRLLHPRYRVAVVSRGYKRKTKGMIVATEGSTAWDIGDEPRQIKRKYPDLTVIVDADRSRAIGYLCDLAEEQRPQLIVLDDGFQHRKVKADLNIVLTDYNRILTKDYLLPAGRLREPAGSIQRADMVILTKCPDDLAPIDLRAAKRDLALYPHQKLFFSKFLYGQGLKPLFSDQSPSAEVRSALAIAGIASPKLFFREIRTRFPSGTDRIYPDHHEFTDREICLLIQDWHELHRKDANAIVVCTEKDAMRLALRQSSFPQEMQERFYYLPVEVKLMFDQEKVFVDRLLGVIQHKK.

An ATP-binding site is contributed by 49 to 56; sequence TIGGTGKT.

This sequence belongs to the LpxK family.

It catalyses the reaction a lipid A disaccharide + ATP = a lipid IVA + ADP + H(+). It participates in glycolipid biosynthesis; lipid IV(A) biosynthesis; lipid IV(A) from (3R)-3-hydroxytetradecanoyl-[acyl-carrier-protein] and UDP-N-acetyl-alpha-D-glucosamine: step 6/6. Transfers the gamma-phosphate of ATP to the 4'-position of a tetraacyldisaccharide 1-phosphate intermediate (termed DS-1-P) to form tetraacyldisaccharide 1,4'-bis-phosphate (lipid IVA). This chain is Tetraacyldisaccharide 4'-kinase, found in Porphyromonas gingivalis (strain ATCC BAA-308 / W83).